The chain runs to 228 residues: L-ribulose-5-phosphate 4-epimerase UlaF (228 aa).

Residues 26 to 27 (GN), 43 to 44 (SG), and 72 to 73 (SS) contribute to the substrate site. 3 residues coordinate Zn(2+): D74, H93, and H95. D118 functions as the Proton donor/acceptor in the catalytic mechanism. Position 167 (H167) interacts with Zn(2+). Residue Y225 is the Proton donor/acceptor of the active site.

Belongs to the aldolase class II family. AraD/FucA subfamily. Zn(2+) serves as cofactor.

It catalyses the reaction L-ribulose 5-phosphate = D-xylulose 5-phosphate. The protein operates within cofactor degradation; L-ascorbate degradation; D-xylulose 5-phosphate from L-ascorbate: step 4/4. In terms of biological role, catalyzes the isomerization of L-ribulose 5-phosphate to D-xylulose 5-phosphate. Is involved in the anaerobic L-ascorbate utilization. The chain is L-ribulose-5-phosphate 4-epimerase UlaF from Salmonella paratyphi A (strain ATCC 9150 / SARB42).